The sequence spans 378 residues: Heat-inducible transcription repressor HrcA (378 aa).

Belongs to the HrcA family.

Its function is as follows. Negative regulator of class I heat shock genes (grpE-dnaK-dnaJ and groELS operons). Prevents heat-shock induction of these operons. The polypeptide is Heat-inducible transcription repressor HrcA (Synechocystis sp. (strain ATCC 27184 / PCC 6803 / Kazusa)).